Consider the following 105-residue polypeptide: Oxytocin-neurophysin 1 (105 aa).

C1 and C6 are joined by a disulfide. A Glycine amide modification is found at G9. 7 disulfide bridges follow: C22–C66, C25–C39, C33–C56, C40–C46, C73–C85, C79–C97, and C86–C91.

It belongs to the vasopressin/oxytocin family. Interacts with oxytocin receptor (Ki=1.5 nM). Interacts with vasopressin V1aR/AVPR1A (Ki=37 nM), V1bR/AVPR1B (Ki=222 nM), and V2R/AVPR2 receptors (Ki=823 nM).

The protein localises to the secreted. Its function is as follows. Neurophysin 1 specifically binds oxytocin. In terms of biological role, oxytocin causes contraction of the smooth muscle of the uterus and of the mammary gland. Acts by binding to oxytocin receptor (OXTR). In Equus caballus (Horse), this protein is Oxytocin-neurophysin 1 (OXT).